The following is a 383-amino-acid chain: Transposase InsI for insertion sequence element IS30A (383 aa).

The region spanning V213–V379 is the Integrase catalytic domain.

Belongs to the transposase IS30 family.

In terms of biological role, required for the transposition of the insertion element. The sequence is that of Transposase InsI for insertion sequence element IS30A (insI1) from Escherichia coli (strain K12).